Consider the following 920-residue polypeptide: Neurofibromin-A (920 aa).

In terms of domain architecture, Ras-GAP spans 63–291; it reads NKTLPLIKDL…EKMSAYFNLI (229 aa). Disordered stretches follow at residues 344-405 and 477-508; these read KWLA…TTTA and LGPSPKTKTERKKKETDAAEEPTTSLQNGASM. Polar residues predominate over residues 346–369; that stretch reads LATTPSGNTPSPAISNASSAHNGK. A compositionally biased stretch (low complexity) spans 370–405; it reads SNNTTNNNNNNNNNNNNNNNNNNNNNNNSNKTTTTA. Polar residues predominate over residues 498 to 507; the sequence is PTTSLQNGAS. In terms of domain architecture, CRAL-TRIO spans 512 to 673; that stretch reads FDECTHMLER…TSKDFITKSY (162 aa).

Functionally, regulator of the GTPase activity of Ras, mainly RasG and RasB. The polypeptide is Neurofibromin-A (nfaA) (Dictyostelium discoideum (Social amoeba)).